The chain runs to 350 residues: Secreted effector protein PipB2 (350 aa).

4 consecutive Pentapeptide repeat domains span residues 162 to 201, 202 to 241, 247 to 286, and 287 to 326; these read ANLT…NLSG, TSLG…SLLG, CNCS…IMEG, and AVLT…TLTD.

In terms of assembly, interacts with the host kinesin light chain (KLC), a subunit of the kinesin-1 motor complex.

The protein localises to the secreted. The protein resides in the host membrane. Effector proteins function to alter host cell physiology and promote bacterial survival in host tissues. Involved in the reorganization of late endosome/lysosome (LE/Lys) compartments in mammalian cells. Necessary and sufficient to link kinesin-1 onto the Salmonella-containing vacuole (SCV) membrane. Required for centrifugal extension of lysosomal glycoprotein-rich membrane tubules, known as Salmonella-induced filaments (Sifs), away from the SCV and toward the cell periphery. Required for virulence, but not for intracellular survival and replication in phagocytic cells. This is Secreted effector protein PipB2 (pipB2) from Salmonella typhimurium (strain LT2 / SGSC1412 / ATCC 700720).